Consider the following 170-residue polypeptide: Putative apoptosis inhibitor ORF87 (170 aa).

BIR repeat units follow at residues 22-92 (RIKS…PVGK) and 104-169 (RLKS…KLSS).

Its function is as follows. May act as an apoptosis inhibitor. The protein is Putative apoptosis inhibitor ORF87 of Ostreid herpesvirus 1 (isolate France) (OsHV-1).